We begin with the raw amino-acid sequence, 424 residues long: Serine--tRNA ligase (424 aa).

T231–E233 provides a ligand contact to L-serine. Residue R262–E264 participates in ATP binding. E285 provides a ligand contact to L-serine. E349–S352 serves as a coordination point for ATP. S385 contributes to the L-serine binding site.

This sequence belongs to the class-II aminoacyl-tRNA synthetase family. Type-1 seryl-tRNA synthetase subfamily. As to quaternary structure, homodimer. The tRNA molecule binds across the dimer.

Its subcellular location is the cytoplasm. It catalyses the reaction tRNA(Ser) + L-serine + ATP = L-seryl-tRNA(Ser) + AMP + diphosphate + H(+). The enzyme catalyses tRNA(Sec) + L-serine + ATP = L-seryl-tRNA(Sec) + AMP + diphosphate + H(+). Its pathway is aminoacyl-tRNA biosynthesis; selenocysteinyl-tRNA(Sec) biosynthesis; L-seryl-tRNA(Sec) from L-serine and tRNA(Sec): step 1/1. Catalyzes the attachment of serine to tRNA(Ser). Is also able to aminoacylate tRNA(Sec) with serine, to form the misacylated tRNA L-seryl-tRNA(Sec), which will be further converted into selenocysteinyl-tRNA(Sec). The protein is Serine--tRNA ligase of Geobacillus kaustophilus (strain HTA426).